Reading from the N-terminus, the 445-residue chain is Histidinol dehydrogenase (445 aa).

3 residues coordinate NAD(+): tyrosine 130, glutamine 192, and asparagine 215. Residues serine 238, glutamine 260, and histidine 263 each contribute to the substrate site. Positions 260 and 263 each coordinate Zn(2+). Active-site proton acceptor residues include glutamate 328 and histidine 329. Residues histidine 329, aspartate 362, glutamate 416, and histidine 421 each contribute to the substrate site. Aspartate 362 serves as a coordination point for Zn(2+). Position 421 (histidine 421) interacts with Zn(2+).

Belongs to the histidinol dehydrogenase family. It depends on Zn(2+) as a cofactor.

It carries out the reaction L-histidinol + 2 NAD(+) + H2O = L-histidine + 2 NADH + 3 H(+). Its pathway is amino-acid biosynthesis; L-histidine biosynthesis; L-histidine from 5-phospho-alpha-D-ribose 1-diphosphate: step 9/9. Functionally, catalyzes the sequential NAD-dependent oxidations of L-histidinol to L-histidinaldehyde and then to L-histidine. The protein is Histidinol dehydrogenase of Gloeobacter violaceus (strain ATCC 29082 / PCC 7421).